Here is a 217-residue protein sequence, read N- to C-terminus: Tectonin-1 (217 aa).

6 repeat units span residues 2–37, 38–74, 75–111, 112–146, 147–182, and 183–217. Positions 2–217 are 6 X approximate tandem repeats; that stretch reads VHWEKHEGEL…KLHHIYKATL (216 aa).

It belongs to the tectonin family.

The protein localises to the cell surface. It is found in the cytoplasmic vesicle membrane. Its function is as follows. Probably involved in bacterial recognition. May be a lectin that function as part of a transmembrane signaling complex during phagocytosis. The polypeptide is Tectonin-1 (TECA) (Physarum polycephalum (Slime mold)).